We begin with the raw amino-acid sequence, 380 residues long: L-lactate dehydrogenase (380 aa).

The 380-residue stretch at 1–380 (MIISSTTDFR…DRSILAKTDR (380 aa)) folds into the FMN hydroxy acid dehydrogenase domain. Tyrosine 24 serves as a coordination point for substrate. Serine 106 and glutamine 127 together coordinate FMN. Tyrosine 129 serves as a coordination point for substrate. Threonine 155 serves as a coordination point for FMN. Residue arginine 164 coordinates substrate. Lysine 251 lines the FMN pocket. Histidine 275 (proton acceptor) is an active-site residue. Arginine 278 provides a ligand contact to substrate. 306–330 (DGGVRSGLDVVRMLALGAKGVLLGR) contributes to the FMN binding site.

The protein belongs to the FMN-dependent alpha-hydroxy acid dehydrogenase family. FMN serves as cofactor.

The protein resides in the cell inner membrane. The enzyme catalyses (S)-lactate + A = pyruvate + AH2. Catalyzes the conversion of L-lactate to pyruvate. Is coupled to the respiratory chain. This is L-lactate dehydrogenase from Caulobacter sp. (strain K31).